We begin with the raw amino-acid sequence, 194 residues long: Large ribosomal subunit protein eL15 (194 aa).

The tract at residues 158–194 (ANRGLTSAGKKGRGLMYKGKGAEKARPGVRANGKKTK) is disordered.

It belongs to the eukaryotic ribosomal protein eL15 family.

This Methanococcus maripaludis (strain DSM 14266 / JCM 13030 / NBRC 101832 / S2 / LL) protein is Large ribosomal subunit protein eL15.